The following is a 359-amino-acid chain: NADH-quinone oxidoreductase subunit H (359 aa).

8 consecutive transmembrane segments (helical) span residues 19–39 (IGWF…FIAL), 94–114 (FLFV…FAVL), 127–147 (VGLF…LAAG), 166–186 (IVSY…LAGT), 202–222 (FMHW…IYFI), 266–286 (MFMV…SPLP), 301–321 (VWGA…QMWL), and 337–357 (CWKV…IWVI).

Belongs to the complex I subunit 1 family. As to quaternary structure, NDH-1 is composed of 14 different subunits. Subunits NuoA, H, J, K, L, M, N constitute the membrane sector of the complex.

It localises to the cell inner membrane. It carries out the reaction a quinone + NADH + 5 H(+)(in) = a quinol + NAD(+) + 4 H(+)(out). NDH-1 shuttles electrons from NADH, via FMN and iron-sulfur (Fe-S) centers, to quinones in the respiratory chain. The immediate electron acceptor for the enzyme in this species is believed to be ubiquinone. Couples the redox reaction to proton translocation (for every two electrons transferred, four hydrogen ions are translocated across the cytoplasmic membrane), and thus conserves the redox energy in a proton gradient. This subunit may bind ubiquinone. This is NADH-quinone oxidoreductase subunit H from Chlorobaculum parvum (strain DSM 263 / NCIMB 8327) (Chlorobium vibrioforme subsp. thiosulfatophilum).